A 47-amino-acid chain; its full sequence is Large ribosomal subunit protein bL33 (47 aa).

It belongs to the bacterial ribosomal protein bL33 family.

The polypeptide is Large ribosomal subunit protein bL33 (Staphylococcus capitis).